The sequence spans 188 residues: Elongation factor P-like protein (188 aa).

Belongs to the elongation factor P family.

This Aliivibrio fischeri (strain ATCC 700601 / ES114) (Vibrio fischeri) protein is Elongation factor P-like protein.